Consider the following 73-residue polypeptide: UPF0346 protein BLi02292/BL01432 (73 aa).

Belongs to the UPF0346 family.

The chain is UPF0346 protein BLi02292/BL01432 from Bacillus licheniformis (strain ATCC 14580 / DSM 13 / JCM 2505 / CCUG 7422 / NBRC 12200 / NCIMB 9375 / NCTC 10341 / NRRL NRS-1264 / Gibson 46).